The primary structure comprises 354 residues: Sulfate permease CysP (354 aa).

8 helical membrane passes run L3–A23, A40–V60, I77–I97, L125–V145, I164–N184, V197–L217, V293–L313, and I320–I340.

It belongs to the inorganic phosphate transporter (PiT) (TC 2.A.20) family.

It is found in the cell membrane. In terms of biological role, involved in the import of sulfate. In Bacillus subtilis (strain 168), this protein is Sulfate permease CysP (cysP).